We begin with the raw amino-acid sequence, 805 residues long: FAD-dependent monooxygenase verC1 (805 aa).

Positions 1–20 (MTFRVIIVGGGVAGLTLASA) are cleaved as a signal peptide. FAD is bound by residues E32, A46, and R107. N-linked (GlcNAc...) asparagine glycosylation is present at N132. The active site involves Y214. Positions 306 and 319 each coordinate FAD. A run of 7 helical transmembrane segments spans residues 551-571 (ALTMAQIPTLFTFYGQMAGLG), 604-624 (IAVLPAIIVSYYIPLSAAFFW), 632-652 (SWLFVWQMHPIWTAITLYLFS), 671-691 (LPVIKFSMTVLVIGAAGFWMW), 703-723 (VFFPTAVPSTQAPFAACVCAI), 726-746 (WDMLSTFGSTFLWLGYLIWDL), and 761-781 (IYGVAAFVALGPGAAIGLGWL).

It belongs to the paxM FAD-dependent monooxygenase family.

Its subcellular location is the membrane. The protein operates within secondary metabolite biosynthesis; terpenoid biosynthesis. It functions in the pathway mycotoxin biosynthesis. Functionally, FAD-dependent monooxygenase; part of the gene cluster that mediates the biosynthesis of the neurotoxin verrucosidin, a methylated alpha-pyrone polyketide that inhibits oxidative phosphorylation in mitochondria and thereby causes neurological diseases. The carbon backbone of verrucosidin is synthesized by the HR-PKS verA, and further modified by the other verrucodidin cluster enzymes. The protein is FAD-dependent monooxygenase verC1 of Penicillium polonicum.